The sequence spans 420 residues: Glutamyl-tRNA reductase (420 aa).

Residues 49-52 (TCNR), S109, 114-116 (EPQ), and Q120 each bind substrate. C50 functions as the Nucleophile in the catalytic mechanism. 189 to 194 (GAGETI) is a binding site for NADP(+).

Belongs to the glutamyl-tRNA reductase family. As to quaternary structure, homodimer.

The enzyme catalyses (S)-4-amino-5-oxopentanoate + tRNA(Glu) + NADP(+) = L-glutamyl-tRNA(Glu) + NADPH + H(+). It functions in the pathway porphyrin-containing compound metabolism; protoporphyrin-IX biosynthesis; 5-aminolevulinate from L-glutamyl-tRNA(Glu): step 1/2. Catalyzes the NADPH-dependent reduction of glutamyl-tRNA(Glu) to glutamate 1-semialdehyde (GSA). The chain is Glutamyl-tRNA reductase from Photorhabdus laumondii subsp. laumondii (strain DSM 15139 / CIP 105565 / TT01) (Photorhabdus luminescens subsp. laumondii).